Reading from the N-terminus, the 887-residue chain is Protein PTHB1 (887 aa).

Residues 1 to 407 (MSLFKARDWW…SQGVWPMTER (407 aa)) are seven-bladed beta-propeller. Positions 685 to 765 (KDKTPAPLQH…FLPLQEDTQE (81 aa)) are interaction with LZTL1. Residues 850–887 (DLEERSVEQDSTELFTNHRHLTAETPRPEVSPLQGVSE) form a disordered region.

Part of BBSome complex, that contains BBS1, BBS2, BBS4, BBS5, BBS7, BBS8/TTC8, BBS9 and BBIP10. Interacts with LZTL1; the interaction mediates the association of LZTL1 with the BBsome complex and regulates BBSome ciliary trafficking. Widely expressed. Expressed in adult heart, skeletal muscle, lung, liver, kidney, placenta and brain, and in fetal kidney, lung, liver and brain.

Its subcellular location is the cytoplasm. The protein localises to the cytoskeleton. It localises to the microtubule organizing center. It is found in the centrosome. The protein resides in the cell projection. Its subcellular location is the cilium membrane. The protein localises to the centriolar satellite. The BBSome complex is thought to function as a coat complex required for sorting of specific membrane proteins to the primary cilia. The BBSome complex is required for ciliogenesis but is dispensable for centriolar satellite function. This ciliogenic function is mediated in part by the Rab8 GDP/GTP exchange factor, which localizes to the basal body and contacts the BBSome. Rab8(GTP) enters the primary cilium and promotes extension of the ciliary membrane. Firstly the BBSome associates with the ciliary membrane and binds to RAB3IP/Rabin8, the guanosyl exchange factor (GEF) for Rab8 and then the Rab8-GTP localizes to the cilium and promotes docking and fusion of carrier vesicles to the base of the ciliary membrane. Required for proper BBSome complex assembly and its ciliary localization. The polypeptide is Protein PTHB1 (BBS9) (Homo sapiens (Human)).